Here is a 144-residue protein sequence, read N- to C-terminus: Maximins 6/H10 (144 aa).

Positions 1–18 (MNFKYIVAVSFLIASAYA) are cleaved as a signal peptide. The propeptide occupies 19–43 (RSVKNDEQSLSQRDVLDEESLREIR). N70 carries the post-translational modification Asparagine amide. Residues 74-123 (TAEDHEVMKRLEAVMRDLDSLDHPEEASERETRGFNQEEIANRFTKKEKR) constitute a propeptide that is removed on maturation. At L143 the chain carries Leucine amide.

This sequence belongs to the bombinin family. In terms of tissue distribution, expressed by the skin glands.

It is found in the secreted. Maximin-6 shows antimicrobial activity against bacteria and against the fungus C.albicans. It has little hemolytic activity. In terms of biological role, maximin-H10 shows antimicrobial activity against bacteria and against the fungus C.albicans. Shows strong hemolytic activity. The protein is Maximins 6/H10 of Bombina maxima (Giant fire-bellied toad).